We begin with the raw amino-acid sequence, 189 residues long: Elongation factor P (189 aa).

The residue at position 34 (Lys-34) is an N6-(3,6-diaminohexanoyl)-5-hydroxylysine.

It belongs to the elongation factor P family. May be beta-lysylated on the epsilon-amino group of Lys-34 by the combined action of EpmA and EpmB, and then hydroxylated on the C5 position of the same residue by EpmC (if this protein is present). Lysylation is critical for the stimulatory effect of EF-P on peptide-bond formation. The lysylation moiety may extend toward the peptidyltransferase center and stabilize the terminal 3-CCA end of the tRNA. Hydroxylation of the C5 position on Lys-34 may allow additional potential stabilizing hydrogen-bond interactions with the P-tRNA.

It localises to the cytoplasm. It functions in the pathway protein biosynthesis; polypeptide chain elongation. Its function is as follows. Involved in peptide bond synthesis. Alleviates ribosome stalling that occurs when 3 or more consecutive Pro residues or the sequence PPG is present in a protein, possibly by augmenting the peptidyl transferase activity of the ribosome. Modification of Lys-34 is required for alleviation. The protein is Elongation factor P of Francisella tularensis subsp. tularensis (strain FSC 198).